The following is a 746-amino-acid chain: SNF-related serine/threonine-protein kinase (746 aa).

One can recognise a Protein kinase domain in the interval 16 to 269; that stretch reads YDLDKTLGRG…LEEIESHPWL (254 aa). Residues 22–30 and lysine 45 each bind ATP; that span reads LGRGHFAVV. The active-site Proton acceptor is aspartate 139. Position 162 is a phosphoserine (serine 162). At threonine 173 the chain carries Phosphothreonine; by LKB1. In terms of domain architecture, UBA spans 291-334; that stretch reads SEEEHNSIIQRMVLGDIADRDAIVEALETNRYNHITATYFLLAE. Residues serine 362, serine 390, serine 482, serine 495, and serine 518 each carry the phosphoserine modification. The segment at 383 to 414 is disordered; the sequence is SHATVPQSPARAGDSVLNGHRSKGLCDPAKKD. Acidic residues predominate over residues 494-503; sequence ESDDEFDMDE. The interval 494-638 is disordered; that stretch reads ESDDEFDMDE…SSSSSPASAA (145 aa). Positions 522-532 are enriched in basic residues; that stretch reads VHKRYHRRKSQ. The span at 533–542 shows a compositional bias: low complexity; the sequence is GRGSSCSSSE. An Omega-N-methylarginine modification is found at arginine 534. The span at 549–558 shows a compositional bias: basic and acidic residues; the sequence is ESRRRLDKDS. Gly residues-rich tracts occupy residues 575-592 and 600-614; these read GSEG…GGGV and QGTG…GGTP. Low complexity predominate over residues 615–638; sequence SGTAGSSRRCAGPDSSSSSPASAA.

Belongs to the protein kinase superfamily. CAMK Ser/Thr protein kinase family. Mg(2+) serves as cofactor. Autophosphorylated. Phosphorylation on Thr-173 by STK11/LKB1 in complex with STE20-related adapter-alpha (STRADA) pseudo kinase and CAB39. In terms of tissue distribution, ubiquitously expressed in all tissues examined with highest levels in the brain and testis. Strongly expressed in the pyramidal and granule neurons of the hippocampus and also in the cerebellum.

It localises to the nucleus. The enzyme catalyses L-seryl-[protein] + ATP = O-phospho-L-seryl-[protein] + ADP + H(+). It catalyses the reaction L-threonyl-[protein] + ATP = O-phospho-L-threonyl-[protein] + ADP + H(+). With respect to regulation, activated by phosphorylation on Thr-173. Functionally, may play a role in hematopoietic cell proliferation or differentiation. Potential mediator of neuronal apoptosis. The polypeptide is SNF-related serine/threonine-protein kinase (Rattus norvegicus (Rat)).